A 462-amino-acid polypeptide reads, in one-letter code: Elongation factor 1-alpha 1 (462 aa).

G2 carries the n,N,N-trimethylglycine modification. Residues 5–242 form the tr-type G domain; the sequence is KTHINIVVIG…DCILPPTRPT (238 aa). The G1 stretch occupies residues 14-21; it reads GHVDSGKS. Residue 14-21 coordinates GTP; that stretch reads GHVDSGKS. K36 carries the N6,N6,N6-trimethyllysine; alternate modification. K36 bears the N6,N6-dimethyllysine; alternate mark. K36 is subject to N6-methyllysine; alternate. K55 carries the post-translational modification N6,N6-dimethyllysine. Positions 70–74 are G2; sequence GITID. At K79 the chain carries N6,N6,N6-trimethyllysine; by EEF1AKMT1. The segment at 91 to 94 is G3; sequence DAPG. 153–156 contributes to the GTP binding site; the sequence is NKMD. The segment at 153–156 is G4; the sequence is NKMD. An N6,N6,N6-trimethyllysine; alternate; by EEF1AKMT3 modification is found at K165. An N6,N6-dimethyllysine; alternate; by EEF1AKMT3 modification is found at K165. Position 165 is an N6-acetyllysine; alternate (K165). K165 carries the post-translational modification N6-methyllysine; alternate; by EEF1AKMT3. K172 carries the N6-acetyllysine modification. 194-196 is a GTP binding site; sequence SGW. The segment at 194-196 is G5; it reads SGW. The residue at position 273 (K273) is an N6-acetyllysine. A Phosphoserine; by TGFBR1 modification is found at S300. 5-glutamyl glycerylphosphorylethanolamine is present on E301. N6,N6,N6-trimethyllysine; by EEF1AKMT2 is present on K318. At E374 the chain carries 5-glutamyl glycerylphosphorylethanolamine. Residue K385 forms a Glycyl lysine isopeptide (Lys-Gly) (interchain with G-Cter in ubiquitin) linkage. K392 carries the post-translational modification N6-acetyllysine; alternate. K392 is modified (N6-succinyllysine; alternate). T432 is subject to Phosphothreonine; by PASK. N6-acetyllysine is present on K439.

This sequence belongs to the TRAFAC class translation factor GTPase superfamily. Classic translation factor GTPase family. EF-Tu/EF-1A subfamily. As to quaternary structure, found in a nuclear export complex with XPO5, EEF1A1, Ran and aminoacylated tRNA. Interacts with PARP1 and TXK. Interacts with KARS1. May interact with ERGIC2. Interacts with IFIT1 (via TPR repeats 4-7). Interacts with DLC1, facilitating distribution to the membrane periphery and ruffles upon growth factor stimulation. Interacts with ZPR1; the interaction occurs in a epidermal growth factor (EGF)-dependent manner. Interacts with PPP1R16B. Interacts with SPHK1 and SPHK2; both interactions increase SPHK1 and SPHK2 kinase activity. Interacts with guanyl-nucleotide exchange factor EEF1B2. Interacts (via middle-region) with HTATIP2 (via N-terminus); the interaction is direct and competes with EEF1A1 binding to guanyl-nucleotide exchange factor EEF1B2, thereby inhibiting GDP for GTP exchange and reactivation of EEF1A1. Interacts with tRNA. Post-translationally, ISGylated. In terms of processing, phosphorylated by TXK. Phosphorylation by PASK increases translation efficiency. Phosphorylated by ROCK2. Phosphorylation by TGFBR1 inhibits translation elongation. Trimethylated at Lys-79 by EEF1AKMT1. Methylated at Lys-165 by EEF1AKMT3, methylation by EEF1AKMT3 is dynamic as well as inducible by stress conditions, such as ER-stress, and plays a regulatory role on mRNA translation. Trimethylated at Lys-318 by EEF1AKMT2. Mono-, di-, and trimethylated at Lys-36 by EEF1AKMT4; trimethylated form is predominant. Methylation by EEF1AKMT4 contributes to the fine-tuning of translation rates for a subset of tRNAs. Trimethylated at Gly-2 by METTL13. Mono- and dimethylated at Lys-55 by METTL13; dimethylated form is predominant. Post-translationally, ubiquitinated at Lys-385 by RNF14 in response to ribosome collisions (ribosome stalling), leading to its degradation by the proteasome and rescue of stalled ribosomes.

It is found in the cytoplasm. Its subcellular location is the nucleus. The protein localises to the nucleolus. It localises to the cell membrane. It carries out the reaction GTP + H2O = GDP + phosphate + H(+). Functionally, translation elongation factor that catalyzes the GTP-dependent binding of aminoacyl-tRNA (aa-tRNA) to the A-site of ribosomes during the elongation phase of protein synthesis. Base pairing between the mRNA codon and the aa-tRNA anticodon promotes GTP hydrolysis, releasing the aa-tRNA from EEF1A1 and allowing its accommodation into the ribosome. The growing protein chain is subsequently transferred from the P-site peptidyl tRNA to the A-site aa-tRNA, extending it by one amino acid through ribosome-catalyzed peptide bond formation. Also plays a role in the positive regulation of IFNG transcription in T-helper 1 cells as part of an IFNG promoter-binding complex with TXK and PARP1. Also plays a role in cytoskeleton organization by promoting actin bundling. This Bos taurus (Bovine) protein is Elongation factor 1-alpha 1 (EEF1A1).